The chain runs to 381 residues: Probable serine/threonine-protein kinase PBL21 (381 aa).

Residue Cys-3 is the site of S-palmitoyl cysteine attachment. The Protein kinase domain maps to 78–354; it reads FREVNLLGEG…GDIVVALEYL (277 aa). Residues 84–92 and Lys-106 each bind ATP; that span reads LGEGGFGRV. Asp-204 serves as the catalytic Proton acceptor. The disordered stretch occupies residues 362-381; sequence EARNVSSPSPEISRTPRRDL.

The protein belongs to the protein kinase superfamily. Ser/Thr protein kinase family. In terms of processing, palmitoylation at Cys-3 and Cys-7 are required for plasma membrane location.

It localises to the cell membrane. It catalyses the reaction L-seryl-[protein] + ATP = O-phospho-L-seryl-[protein] + ADP + H(+). The enzyme catalyses L-threonyl-[protein] + ATP = O-phospho-L-threonyl-[protein] + ADP + H(+). May be involved in plant defense signaling. This Arabidopsis thaliana (Mouse-ear cress) protein is Probable serine/threonine-protein kinase PBL21.